We begin with the raw amino-acid sequence, 182 residues long: Crossover junction endodeoxyribonuclease RuvC (182 aa).

Active-site residues include aspartate 7, glutamate 69, and aspartate 141. Mg(2+) is bound by residues aspartate 7, glutamate 69, and aspartate 141.

The protein belongs to the RuvC family. As to quaternary structure, homodimer which binds Holliday junction (HJ) DNA. The HJ becomes 2-fold symmetrical on binding to RuvC with unstacked arms; it has a different conformation from HJ DNA in complex with RuvA. In the full resolvosome a probable DNA-RuvA(4)-RuvB(12)-RuvC(2) complex forms which resolves the HJ. Requires Mg(2+) as cofactor.

The protein resides in the cytoplasm. The catalysed reaction is Endonucleolytic cleavage at a junction such as a reciprocal single-stranded crossover between two homologous DNA duplexes (Holliday junction).. In terms of biological role, the RuvA-RuvB-RuvC complex processes Holliday junction (HJ) DNA during genetic recombination and DNA repair. Endonuclease that resolves HJ intermediates. Cleaves cruciform DNA by making single-stranded nicks across the HJ at symmetrical positions within the homologous arms, yielding a 5'-phosphate and a 3'-hydroxyl group; requires a central core of homology in the junction. The consensus cleavage sequence is 5'-(A/T)TT(C/G)-3'. Cleavage occurs on the 3'-side of the TT dinucleotide at the point of strand exchange. HJ branch migration catalyzed by RuvA-RuvB allows RuvC to scan DNA until it finds its consensus sequence, where it cleaves and resolves the cruciform DNA. This chain is Crossover junction endodeoxyribonuclease RuvC, found in Polaromonas sp. (strain JS666 / ATCC BAA-500).